Here is a 340-residue protein sequence, read N- to C-terminus: Undecaprenyl-phosphate 4-deoxy-4-formamido-L-arabinose transferase (340 aa).

A run of 2 helical transmembrane segments spans residues 235 to 255 (LSIV…ALIF) and 269 to 289 (LFVL…GMGL).

It belongs to the glycosyltransferase 2 family.

Its subcellular location is the cell inner membrane. It carries out the reaction UDP-4-deoxy-4-formamido-beta-L-arabinose + di-trans,octa-cis-undecaprenyl phosphate = 4-deoxy-4-formamido-alpha-L-arabinopyranosyl di-trans,octa-cis-undecaprenyl phosphate + UDP. It functions in the pathway glycolipid biosynthesis; 4-amino-4-deoxy-alpha-L-arabinose undecaprenyl phosphate biosynthesis; 4-amino-4-deoxy-alpha-L-arabinose undecaprenyl phosphate from UDP-4-deoxy-4-formamido-beta-L-arabinose and undecaprenyl phosphate: step 1/2. Its pathway is bacterial outer membrane biogenesis; lipopolysaccharide biosynthesis. Functionally, catalyzes the transfer of 4-deoxy-4-formamido-L-arabinose from UDP to undecaprenyl phosphate. The modified arabinose is attached to lipid A and is required for resistance to polymyxin and cationic antimicrobial peptides. In Pseudomonas fluorescens (strain Pf0-1), this protein is Undecaprenyl-phosphate 4-deoxy-4-formamido-L-arabinose transferase.